We begin with the raw amino-acid sequence, 102 residues long: Large ribosomal subunit protein bL21 (102 aa).

It belongs to the bacterial ribosomal protein bL21 family. Part of the 50S ribosomal subunit. Contacts protein L20.

Functionally, this protein binds to 23S rRNA in the presence of protein L20. The sequence is that of Large ribosomal subunit protein bL21 from Desulfovibrio desulfuricans (strain ATCC 27774 / DSM 6949 / MB).